The primary structure comprises 329 residues: 4-hydroxythreonine-4-phosphate dehydrogenase (329 aa).

Substrate contacts are provided by His-136 and Thr-137. His-166, His-211, and His-266 together coordinate a divalent metal cation. Residues Lys-274, Asn-283, and Arg-292 each coordinate substrate.

It belongs to the PdxA family. As to quaternary structure, homodimer. It depends on Zn(2+) as a cofactor. The cofactor is Mg(2+). Co(2+) serves as cofactor.

It is found in the cytoplasm. It catalyses the reaction 4-(phosphooxy)-L-threonine + NAD(+) = 3-amino-2-oxopropyl phosphate + CO2 + NADH. Its pathway is cofactor biosynthesis; pyridoxine 5'-phosphate biosynthesis; pyridoxine 5'-phosphate from D-erythrose 4-phosphate: step 4/5. Its function is as follows. Catalyzes the NAD(P)-dependent oxidation of 4-(phosphooxy)-L-threonine (HTP) into 2-amino-3-oxo-4-(phosphooxy)butyric acid which spontaneously decarboxylates to form 3-amino-2-oxopropyl phosphate (AHAP). The polypeptide is 4-hydroxythreonine-4-phosphate dehydrogenase (Escherichia coli (strain 55989 / EAEC)).